Reading from the N-terminus, the 663-residue chain is F-box protein DAS1 (663 aa).

The F-box domain occupies Val46 to Ile91.

In terms of assembly, interacts with SKP1. Component of the probable SCF(DAS1) complex containing CDC53, SKP1, RBX1 and DAS1.

The protein operates within protein modification; protein ubiquitination. Its function is as follows. Substrate recognition component of a SCF (SKP1-CUL1-F-box protein) E3 ubiquitin-protein ligase complex which mediates the ubiquitination and subsequent proteasomal degradation of target proteins. Probably recognizes and binds to phosphorylated target proteins. This Saccharomyces cerevisiae (strain ATCC 204508 / S288c) (Baker's yeast) protein is F-box protein DAS1 (DAS1).